Consider the following 274-residue polypeptide: Nitrogenase iron protein (274 aa).

8–15 (GKGGIGKS) lines the ATP pocket. C94 provides a ligand contact to [4Fe-4S] cluster. R97 bears the ADP-ribosylarginine; by dinitrogenase reductase ADP-ribosyltransferase mark. C131 is a [4Fe-4S] cluster binding site.

Belongs to the NifH/BchL/ChlL family. Homodimer. The cofactor is [4Fe-4S] cluster. In terms of processing, the reversible ADP-ribosylation of Arg-97 inactivates the nitrogenase reductase and regulates nitrogenase activity.

The enzyme catalyses N2 + 8 reduced [2Fe-2S]-[ferredoxin] + 16 ATP + 16 H2O = H2 + 8 oxidized [2Fe-2S]-[ferredoxin] + 2 NH4(+) + 16 ADP + 16 phosphate + 6 H(+). In terms of biological role, the key enzymatic reactions in nitrogen fixation are catalyzed by the nitrogenase complex, which has 2 components: the iron protein and the molybdenum-iron protein. The chain is Nitrogenase iron protein from Chlorobium luteolum (strain DSM 273 / BCRC 81028 / 2530) (Pelodictyon luteolum).